A 138-amino-acid polypeptide reads, in one-letter code: Basic phospholipase A2 homolog Tpu-K49a (138 aa).

The N-terminal stretch at 1-16 (MRTLWIMAVLLVGVEG) is a signal peptide. Cystine bridges form between C42/C131, C44/C60, C59/C111, C65/C138, C66/C104, and C91/C102. The tract at residues 121-133 (KKERINTKIFCKK) is important for membrane-damaging activities in eukaryotes and bacteria; heparin-binding.

As to quaternary structure, monomer. Expressed by the venom gland.

It is found in the secreted. Snake venom phospholipase A2 homolog that lacks catalytic activity. Induces local edema a few hours after injection in the hind foot. Is myotoxic. A model of myotoxic mechanism has been proposed: an apo Lys49-PLA2 is activated by the entrance of a hydrophobic molecule (e.g. fatty acid) at the hydrophobic channel of the protein leading to a reorientation of a monomer. This reorientation causes a transition between 'inactive' to 'active' states, causing alignment of C-terminal and membrane-docking sites (MDoS) side-by-side and putting the membrane-disruption sites (MDiS) in the same plane, exposed to solvent and in a symmetric position for both monomers. The MDoS region stabilizes the toxin on membrane by the interaction of charged residues with phospholipid head groups. Subsequently, the MDiS region destabilizes the membrane with penetration of hydrophobic residues. This insertion causes a disorganization of the membrane, allowing an uncontrolled influx of ions (i.e. calcium and sodium), and eventually triggering irreversible intracellular alterations and cell death. This chain is Basic phospholipase A2 homolog Tpu-K49a, found in Craspedocephalus puniceus (Flat-nosed pitviper).